We begin with the raw amino-acid sequence, 480 residues long: 3-isopropylmalate dehydratase large subunit (480 aa).

3 residues coordinate [4Fe-4S] cluster: C360, C418, and C421.

This sequence belongs to the aconitase/IPM isomerase family. LeuC type 1 subfamily. Heterodimer of LeuC and LeuD. [4Fe-4S] cluster serves as cofactor.

The catalysed reaction is (2R,3S)-3-isopropylmalate = (2S)-2-isopropylmalate. It functions in the pathway amino-acid biosynthesis; L-leucine biosynthesis; L-leucine from 3-methyl-2-oxobutanoate: step 2/4. Functionally, catalyzes the isomerization between 2-isopropylmalate and 3-isopropylmalate, via the formation of 2-isopropylmaleate. The polypeptide is 3-isopropylmalate dehydratase large subunit (Anaeromyxobacter dehalogenans (strain 2CP-1 / ATCC BAA-258)).